The primary structure comprises 142 residues: uncharacterized protein (142 aa).

The signal sequence occupies residues 1–20; that stretch reads MPSVNEFFIFFLIVWHTCEC. A glycan (N-linked (GlcNAc...) asparagine) is linked at Asn-80.

This is an uncharacterized protein from Dictyostelium discoideum (Social amoeba).